We begin with the raw amino-acid sequence, 65 residues long: Pancreatic polypeptide prohormone (65 aa).

The residue at position 36 (tyrosine 36) is a Tyrosine amide. The propeptide occupies 59–65 (ELSPMGA).

The protein belongs to the NPY family.

Its subcellular location is the secreted. Hormone secreted by pancreatic cells that acts as a regulator of pancreatic and gastrointestinal functions probably by signaling through the G protein-coupled receptor NPY4R2. This is Pancreatic polypeptide prohormone (PPY) from Sus scrofa (Pig).